The chain runs to 208 residues: Large ribosomal subunit protein uL4 (208 aa).

Residues 47-84 are disordered; it reads ARAARERSDVARTGKKFGRQKGGGTARHGDRRAPVFIG. Residues 49-58 are compositionally biased toward basic and acidic residues; the sequence is AARERSDVAR.

It belongs to the universal ribosomal protein uL4 family. As to quaternary structure, part of the 50S ribosomal subunit.

One of the primary rRNA binding proteins, this protein initially binds near the 5'-end of the 23S rRNA. It is important during the early stages of 50S assembly. It makes multiple contacts with different domains of the 23S rRNA in the assembled 50S subunit and ribosome. Functionally, forms part of the polypeptide exit tunnel. In Rhizorhabdus wittichii (strain DSM 6014 / CCUG 31198 / JCM 15750 / NBRC 105917 / EY 4224 / RW1) (Sphingomonas wittichii), this protein is Large ribosomal subunit protein uL4.